The chain runs to 463 residues: Adenylosuccinate synthetase, chloroplastic (463 aa).

Residues 44-50 (GDEGKGK) and 72-74 (GHT) each bind GTP. Asp-45 acts as the Proton acceptor in catalysis. Mg(2+) contacts are provided by Asp-45 and Gly-72. Residues 45 to 48 (DEGK), 70 to 73 (NAGH), Thr-164, Arg-178, Asn-256, Thr-271, and Arg-335 contribute to the IMP site. The active-site Proton donor is His-73. 331–337 (TTTGRPR) contacts substrate. Residues Arg-337, 363–365 (KLD), and 446–448 (GVG) each bind GTP.

It belongs to the adenylosuccinate synthetase family. Homodimer. It depends on Mg(2+) as a cofactor.

It is found in the plastid. The protein resides in the chloroplast. It carries out the reaction IMP + L-aspartate + GTP = N(6)-(1,2-dicarboxyethyl)-AMP + GDP + phosphate + 2 H(+). It participates in purine metabolism; AMP biosynthesis via de novo pathway; AMP from IMP: step 1/2. Functionally, plays an important role in the de novo pathway and in the salvage pathway of purine nucleotide biosynthesis. Catalyzes the first committed step in the biosynthesis of AMP from IMP. The protein is Adenylosuccinate synthetase, chloroplastic of Chlamydomonas reinhardtii (Chlamydomonas smithii).